Consider the following 290-residue polypeptide: Purine nucleoside phosphorylase (290 aa).

68-69 contributes to the phosphate binding site; sequence RN. Met-204 contributes to the substrate binding site. Thr-205 contributes to the phosphate binding site.

This sequence belongs to the PNP/MTAP phosphorylase family. MTAP subfamily. Homotrimer.

The protein localises to the cytoplasm. It localises to the nucleus. It carries out the reaction a purine D-ribonucleoside + phosphate = a purine nucleobase + alpha-D-ribose 1-phosphate. It participates in purine metabolism; purine nucleoside salvage. In terms of biological role, purine nucleoside phosphorylase involved in purine salvage. This Drosophila melanogaster (Fruit fly) protein is Purine nucleoside phosphorylase.